Consider the following 517-residue polypeptide: Cell division cycle protein 73 (517 aa).

Positions 124-135 (SEPEAKKPRLDG) are enriched in basic and acidic residues. Disordered regions lie at residues 124 to 159 (SEPE…SAAK) and 306 to 326 (GHHA…LAKP). Positions 315–324 (DAPPGRPPLA) are enriched in pro residues.

This sequence belongs to the CDC73 family. In terms of assembly, component of the PAF1 complex which consists of at least cdc-73, ctr-9, leo-1, pafo-1 and rtfo-1.

The protein resides in the nucleus. Component of the PAF1 complex which is a multifunctional complex involved in transcription initiation via genetic interactions with TATA-binding proteins, elongation and transcription-coupled histone modification. This chain is Cell division cycle protein 73, found in Caenorhabditis elegans.